We begin with the raw amino-acid sequence, 100 residues long: Small ribosomal subunit protein uS14 (100 aa).

It belongs to the universal ribosomal protein uS14 family. Part of the 30S ribosomal subunit. Contacts proteins S3 and S10.

Binds 16S rRNA, required for the assembly of 30S particles and may also be responsible for determining the conformation of the 16S rRNA at the A site. The chain is Small ribosomal subunit protein uS14 from Nostoc sp. (strain PCC 7120 / SAG 25.82 / UTEX 2576).